The following is a 622-amino-acid chain: Probable potassium transport system protein Kup (622 aa).

The next 12 helical transmembrane spans lie at 8-28 (LAVL…TSVL), 50-70 (ILSI…VSLV), 101-121 (VLLL…VITP), 137-157 (PTFT…LFAM), 165-185 (IGKF…LLGV), 213-233 (ITFI…ALYA), 247-267 (WFSV…ALLL), 285-305 (ALIP…QALI), 337-357 (IYMP…VVMF), 366-386 (AYGI…FYVI), 393-413 (PLAL…AFFA), and 419-439 (LFAG…LMIT).

Belongs to the HAK/KUP transporter (TC 2.A.72) family.

The protein localises to the cell inner membrane. The enzyme catalyses K(+)(in) + H(+)(in) = K(+)(out) + H(+)(out). In terms of biological role, transport of potassium into the cell. Likely operates as a K(+):H(+) symporter. This Polaromonas naphthalenivorans (strain CJ2) protein is Probable potassium transport system protein Kup.